The sequence spans 318 residues: Thymidylate synthase (318 aa).

DUMP is bound by residues Arg25 and 180–181 (RR). The Nucleophile role is filled by Cys200. DUMP is bound by residues 220–223 (RSGD), Asn231, and 261–263 (HIY). Asp223 serves as a coordination point for (6R)-5,10-methylene-5,6,7,8-tetrahydrofolate. Ala317 is a (6R)-5,10-methylene-5,6,7,8-tetrahydrofolate binding site.

Belongs to the thymidylate synthase family. Bacterial-type ThyA subfamily. Homodimer.

It is found in the cytoplasm. It carries out the reaction dUMP + (6R)-5,10-methylene-5,6,7,8-tetrahydrofolate = 7,8-dihydrofolate + dTMP. Its pathway is pyrimidine metabolism; dTTP biosynthesis. In terms of biological role, catalyzes the reductive methylation of 2'-deoxyuridine-5'-monophosphate (dUMP) to 2'-deoxythymidine-5'-monophosphate (dTMP) while utilizing 5,10-methylenetetrahydrofolate (mTHF) as the methyl donor and reductant in the reaction, yielding dihydrofolate (DHF) as a by-product. This enzymatic reaction provides an intracellular de novo source of dTMP, an essential precursor for DNA biosynthesis. In Lactobacillus gasseri (strain ATCC 33323 / DSM 20243 / BCRC 14619 / CIP 102991 / JCM 1131 / KCTC 3163 / NCIMB 11718 / NCTC 13722 / AM63), this protein is Thymidylate synthase.